Consider the following 241-residue polypeptide: Large ribosomal subunit protein uL2 (241 aa).

Residues 1–12 (MGKRLISQRRGR) are compositionally biased toward basic residues. Disordered stretches follow at residues 1 to 21 (MGKRLISQRRGRGTPTYRSAS) and 200 to 241 (AVDH…GKRR).

The protein belongs to the universal ribosomal protein uL2 family. Part of the 50S ribosomal subunit. Forms a bridge to the 30S subunit in the 70S ribosome.

Functionally, one of the primary rRNA binding proteins. Required for association of the 30S and 50S subunits to form the 70S ribosome, for tRNA binding and peptide bond formation. It has been suggested to have peptidyltransferase activity; this is somewhat controversial. Makes several contacts with the 16S rRNA in the 70S ribosome. This is Large ribosomal subunit protein uL2 from Methanothermobacter thermautotrophicus (strain ATCC 29096 / DSM 1053 / JCM 10044 / NBRC 100330 / Delta H) (Methanobacterium thermoautotrophicum).